Here is a 338-residue protein sequence, read N- to C-terminus: Mitoferrin-1 (338 aa).

The interval 1–42 (MELRSGSVGSQAVARRMDGDSRDGGGGKDATGSEDYENLPTS) is disordered. Residues 15–26 (RRMDGDSRDGGG) show a composition bias toward basic and acidic residues. Solcar repeat units lie at residues 43–131 (ASVS…MKRT), 141–225 (NSHL…LQEQ), and 232–326 (YNPQ…FKYF). 6 consecutive transmembrane segments (helical) span residues 45 to 64 (VSTH…SVMY), 106 to 125 (GVNV…FACY), 143 to 162 (HLAN…AVMN), 200 to 219 (SYTT…FITY), 234 to 253 (PQSH…AATT), and 301 to 320 (GIQA…WSVY).

The protein belongs to the mitochondrial carrier (TC 2.A.29) family. Interacts with ACB10; this interaction stabilizes SLC25A37 and enhances the function of SLC25A37 to import mitochondrial iron during erythroid differentiation.

It is found in the mitochondrion inner membrane. It catalyses the reaction Fe(2+)(in) = Fe(2+)(out). Mitochondrial iron transporter that specifically mediates iron uptake in developing erythroid cells, thereby playing an essential role in heme biosynthesis. The polypeptide is Mitoferrin-1 (SLC25A37) (Homo sapiens (Human)).